The primary structure comprises 252 residues: Large ribosomal subunit protein uL4 (252 aa).

Belongs to the universal ribosomal protein uL4 family. As to quaternary structure, part of the 50S ribosomal subunit.

Its function is as follows. One of the primary rRNA binding proteins, this protein initially binds near the 5'-end of the 23S rRNA. It is important during the early stages of 50S assembly. It makes multiple contacts with different domains of the 23S rRNA in the assembled 50S subunit and ribosome. Functionally, forms part of the polypeptide exit tunnel. The protein is Large ribosomal subunit protein uL4 of Methanococcus maripaludis (strain DSM 14266 / JCM 13030 / NBRC 101832 / S2 / LL).